Consider the following 349-residue polypeptide: DNA polymerase IV (349 aa).

A UmuC domain is found at 7-188; sequence IIHIDMDYFF…LPVKKLFGVG (182 aa). Mg(2+) contacts are provided by D11 and D106. E107 is a catalytic residue.

The protein belongs to the DNA polymerase type-Y family. Monomer. Mg(2+) serves as cofactor.

The protein resides in the cytoplasm. The enzyme catalyses DNA(n) + a 2'-deoxyribonucleoside 5'-triphosphate = DNA(n+1) + diphosphate. Functionally, poorly processive, error-prone DNA polymerase involved in untargeted mutagenesis. Copies undamaged DNA at stalled replication forks, which arise in vivo from mismatched or misaligned primer ends. These misaligned primers can be extended by PolIV. Exhibits no 3'-5' exonuclease (proofreading) activity. May be involved in translesional synthesis, in conjunction with the beta clamp from PolIII. The polypeptide is DNA polymerase IV (Francisella tularensis subsp. novicida (strain U112)).